The following is a 360-amino-acid chain: Mitogen-activated protein kinase 14 (360 aa).

An N-acetylserine modification is found at Ser-2. Position 2 is a phosphoserine (Ser-2). Phosphothreonine is present on Thr-16. A Protein kinase domain is found at 24–308 (YQNLSPVGSG…AAQALAHAYF (285 aa)). ATP-binding positions include 30–38 (VGSGAYGSV) and Lys-53. Lys-53 bears the N6-acetyllysine mark. The active-site Proton acceptor is Asp-150. Position 152 is an N6-acetyllysine (Lys-152). At Thr-180 the chain carries Phosphothreonine; by MAP2K3, MAP2K4, MAP2K6 and autocatalysis. Tyr-182 carries the post-translational modification Phosphotyrosine; by MAP2K3, MAP2K4, MAP2K6 and autocatalysis. Thr-263 carries the post-translational modification Phosphothreonine. Tyr-323 carries the post-translational modification Phosphotyrosine; by ZAP70.

Belongs to the protein kinase superfamily. CMGC Ser/Thr protein kinase family. MAP kinase subfamily. Component of a signaling complex containing at least AKAP13, PKN1, MAPK14, ZAK and MAP2K3. Within this complex, AKAP13 interacts directly with PKN1, which in turn recruits MAPK14, MAP2K3 and ZAK. Binds to a kinase interaction motif within the protein tyrosine phosphatase, PTPRR. This interaction retains MAPK14 in the cytoplasm and prevents nuclear accumulation. Interacts with SPAG9 and GADD45A. Interacts with CDC25B, CDC25C, DUSP1, DUSP10, DUSP16, NP60, SUPT20H and TAB1. Interacts with casein kinase II subunits CSNK2A1 and CSNK2B. Interacts with PPM1D. Interacts with CDK5RAP3; recruits PPM1D to MAPK14 and may regulate its dephosphorylation. Interacts with DUSP2; this interaction does not lead to catalytic activation of DUSP2 and dephosphrylation of MAPK14. Requires Mg(2+) as cofactor. Dually phosphorylated on Thr-180 and Tyr-182 by the MAP2Ks MAP2K3/MKK3, MAP2K4/MKK4 and MAP2K6/MKK6 in response to inflammatory cytokines, environmental stress or growth factors, which activates the enzyme. Dual phosphorylation can also be mediated by TAB1-mediated autophosphorylation. TCR engagement in T-cells also leads to Tyr-323 phosphorylation by ZAP70. Dephosphorylated and inactivated by DUPS1, DUSP10 and DUSP16. PPM1D also mediates dephosphorylation and inactivation of MAPK14. Post-translationally, acetylated at Lys-53 and Lys-152 by KAT2B and EP300. Acetylation at Lys-53 increases the affinity for ATP and enhances kinase activity. Lys-53 and Lys-152 are deacetylated by HDAC3. In terms of processing, ubiquitinated. Ubiquitination leads to degradation by the proteasome pathway.

The protein resides in the cytoplasm. It is found in the nucleus. The catalysed reaction is L-seryl-[protein] + ATP = O-phospho-L-seryl-[protein] + ADP + H(+). It catalyses the reaction L-threonyl-[protein] + ATP = O-phospho-L-threonyl-[protein] + ADP + H(+). Activated by cell stresses such as DNA damage, heat shock, osmotic shock, anisomycin and sodium arsenite, as well as pro-inflammatory stimuli such as bacterial lipopolysaccharide (LPS) and interleukin-1. Activation occurs through dual phosphorylation of Thr-180 and Tyr-182 by either of two dual specificity kinases, MAP2K3/MKK3 or MAP2K6/MKK6, and potentially also MAP2K4/MKK4, as well as by TAB1-mediated autophosphorylation. MAPK14 phosphorylated on both Thr-180 and Tyr-182 is 10-20-fold more active than MAPK14 phosphorylated only on Thr-180, whereas MAPK14 phosphorylated on Tyr-182 alone is inactive. whereas Thr-180 is necessary for catalysis, Tyr-182 may be required for auto-activation and substrate recognition. Phosphorylated at Tyr-323 by ZAP70 in an alternative activation pathway in response to TCR signaling in T-cells. This alternative pathway is inhibited by GADD45A. Inhibited by dual specificity phosphatases, such as DUSP1, DUSP10, and DUSP16. Specifically inhibited by the binding of pyridinyl-imidazole compounds, which are cytokine-suppressive anti-inflammatory drugs (CSAID). SB203580 is an inhibitor of MAPK14. In terms of biological role, serine/threonine kinase which acts as an essential component of the MAP kinase signal transduction pathway. MAPK14 is one of the four p38 MAPKs which play an important role in the cascades of cellular responses evoked by extracellular stimuli such as pro-inflammatory cytokines or physical stress leading to direct activation of transcription factors. Accordingly, p38 MAPKs phosphorylate a broad range of proteins and it has been estimated that they may have approximately 200 to 300 substrates each. Some of the targets are downstream kinases which are activated through phosphorylation and further phosphorylate additional targets. RPS6KA5/MSK1 and RPS6KA4/MSK2 can directly phosphorylate and activate transcription factors such as CREB1, ATF1, the NF-kappa-B isoform RELA/NFKB3, STAT1 and STAT3, but can also phosphorylate histone H3 and the nucleosomal protein HMGN1. RPS6KA5/MSK1 and RPS6KA4/MSK2 play important roles in the rapid induction of immediate-early genes in response to stress or mitogenic stimuli, either by inducing chromatin remodeling or by recruiting the transcription machinery. On the other hand, two other kinase targets, MAPKAPK2/MK2 and MAPKAPK3/MK3, participate in the control of gene expression mostly at the post-transcriptional level, by phosphorylating ZFP36 (tristetraprolin) and ELAVL1, and by regulating EEF2K, which is important for the elongation of mRNA during translation. MKNK1/MNK1 and MKNK2/MNK2, two other kinases activated by p38 MAPKs, regulate protein synthesis by phosphorylating the initiation factor EIF4E2. MAPK14 also interacts with casein kinase II, leading to its activation through autophosphorylation and further phosphorylation of TP53/p53. In the cytoplasm, the p38 MAPK pathway is an important regulator of protein turnover. For example, CFLAR is an inhibitor of TNF-induced apoptosis whose proteasome-mediated degradation is regulated by p38 MAPK phosphorylation. In a similar way, MAPK14 phosphorylates the ubiquitin ligase SIAH2, regulating its activity towards EGLN3. MAPK14 may also inhibit the lysosomal degradation pathway of autophagy by interfering with the intracellular trafficking of the transmembrane protein ATG9. Another function of MAPK14 is to regulate the endocytosis of membrane receptors by different mechanisms that impinge on the small GTPase RAB5A. In addition, clathrin-mediated EGFR internalization induced by inflammatory cytokines and UV irradiation depends on MAPK14-mediated phosphorylation of EGFR itself as well as of RAB5A effectors. Ectodomain shedding of transmembrane proteins is regulated by p38 MAPKs as well. In response to inflammatory stimuli, p38 MAPKs phosphorylate the membrane-associated metalloprotease ADAM17. Such phosphorylation is required for ADAM17-mediated ectodomain shedding of TGF-alpha family ligands, which results in the activation of EGFR signaling and cell proliferation. Another p38 MAPK substrate is FGFR1. FGFR1 can be translocated from the extracellular space into the cytosol and nucleus of target cells, and regulates processes such as rRNA synthesis and cell growth. FGFR1 translocation requires p38 MAPK activation. In the nucleus, many transcription factors are phosphorylated and activated by p38 MAPKs in response to different stimuli. Classical examples include ATF1, ATF2, ATF6, ELK1, PTPRH, DDIT3, TP53/p53 and MEF2C and MEF2A. The p38 MAPKs are emerging as important modulators of gene expression by regulating chromatin modifiers and remodelers. The promoters of several genes involved in the inflammatory response, such as IL6, IL8 and IL12B, display a p38 MAPK-dependent enrichment of histone H3 phosphorylation on 'Ser-10' (H3S10ph) in LPS-stimulated myeloid cells. This phosphorylation enhances the accessibility of the cryptic NF-kappa-B-binding sites marking promoters for increased NF-kappa-B recruitment. Phosphorylates CDC25B and CDC25C which is required for binding to 14-3-3 proteins and leads to initiation of a G2 delay after ultraviolet radiation. Phosphorylates TIAR following DNA damage, releasing TIAR from GADD45A mRNA and preventing mRNA degradation. The p38 MAPKs may also have kinase-independent roles, which are thought to be due to the binding to targets in the absence of phosphorylation. Protein O-Glc-N-acylation catalyzed by the OGT is regulated by MAPK14, and, although OGT does not seem to be phosphorylated by MAPK14, their interaction increases upon MAPK14 activation induced by glucose deprivation. This interaction may regulate OGT activity by recruiting it to specific targets such as neurofilament H, stimulating its O-Glc-N-acylation. Required in mid-fetal development for the growth of embryo-derived blood vessels in the labyrinth layer of the placenta. Also plays an essential role in developmental and stress-induced erythropoiesis, through regulation of EPO gene expression. Phosphorylates S100A9 at 'Thr-113'. This chain is Mitogen-activated protein kinase 14, found in Pan troglodytes (Chimpanzee).